The following is an 88-amino-acid chain: Selenoprotein W (88 aa).

A cross-link (cysteinyl-selenocysteine (Cys-Sec); redox-active) is located at residues 10–13; that stretch reads CGAU. Position 13 (selenocysteine 13) is a non-standard amino acid, selenocysteine. Position 37 is an S-glutathionyl cysteine (cysteine 37).

The protein belongs to the SelWTH family. Selenoprotein W subfamily. Interacts with DPYSL2, PRDX1, YWHAB, YWHAG, HSP70 and HSP90. As to expression, in the embryo, expressed in the developing nervous system and in mesoderm-derived tissues such as heart and limbs. In the adult, predominantly expressed in brain, skeletal muscle and heart.

Its subcellular location is the cytoplasm. Functionally, plays a role as a glutathione (GSH)-dependent antioxidant. May be involved in a redox-related process. May play a role in the myopathies of selenium deficiency. The sequence is that of Selenoprotein W from Mus musculus (Mouse).